We begin with the raw amino-acid sequence, 305 residues long: Fumarylacetoacetate hydrolase domain-containing protein 2 homolog (305 aa).

3 residues coordinate a divalent metal cation: Glu-141, Glu-143, and Asp-172.

This sequence belongs to the FAH family. Ca(2+) is required as a cofactor. The cofactor is Mg(2+).

Its function is as follows. May have hydrolase activity. In Dictyostelium discoideum (Social amoeba), this protein is Fumarylacetoacetate hydrolase domain-containing protein 2 homolog (fahd2).